A 346-amino-acid polypeptide reads, in one-letter code: Dihydroorotate dehydrogenase (quinone) (346 aa).

FMN is bound by residues 62–66 and threonine 86; that span reads AGMDK. Lysine 66 provides a ligand contact to substrate. Residue 111 to 115 coordinates substrate; sequence NRMGF. FMN-binding residues include asparagine 142 and asparagine 175. Residue asparagine 175 participates in substrate binding. The active-site Nucleophile is the serine 178. Asparagine 180 contacts substrate. FMN is bound by residues lysine 211 and valine 239. 240–241 is a substrate binding site; that stretch reads NT. FMN-binding positions include glycine 261, glycine 289, and 310 to 311; that span reads YT.

This sequence belongs to the dihydroorotate dehydrogenase family. Type 2 subfamily. As to quaternary structure, monomer. FMN is required as a cofactor.

The protein localises to the cell membrane. It catalyses the reaction (S)-dihydroorotate + a quinone = orotate + a quinol. Its pathway is pyrimidine metabolism; UMP biosynthesis via de novo pathway; orotate from (S)-dihydroorotate (quinone route): step 1/1. In terms of biological role, catalyzes the conversion of dihydroorotate to orotate with quinone as electron acceptor. The chain is Dihydroorotate dehydrogenase (quinone) from Thermus thermophilus (strain ATCC 27634 / DSM 579 / HB8).